The chain runs to 129 residues: Ribosome-binding factor A (129 aa).

It belongs to the RbfA family. Monomer. Binds 30S ribosomal subunits, but not 50S ribosomal subunits or 70S ribosomes.

The protein localises to the cytoplasm. Its function is as follows. One of several proteins that assist in the late maturation steps of the functional core of the 30S ribosomal subunit. Associates with free 30S ribosomal subunits (but not with 30S subunits that are part of 70S ribosomes or polysomes). Required for efficient processing of 16S rRNA. May interact with the 5'-terminal helix region of 16S rRNA. The polypeptide is Ribosome-binding factor A (Ectopseudomonas mendocina (strain ymp) (Pseudomonas mendocina)).